The sequence spans 1296 residues: Probable serine/threonine protein kinase IREH1 (1296 aa).

Disordered stretches follow at residues 1–274, 457–480, and 524–553; these read MVFK…SESP, SGAG…QEQH, and SPAL…VGSR. Residues 10–32 are compositionally biased toward low complexity; sequence SSKKSGSSSPDSSNSPRSVGSNS. Position 32 is a phosphoserine (Ser-32). Composition is skewed to basic and acidic residues over residues 68 to 77, 101 to 112, and 178 to 208; these read DGLKKKDGSS, EVKKPPPPEVKE, and RKKE…RDSL. Positions 214 to 249 are enriched in low complexity; it reads PPRSLSPTLPPSGSRLQNVASSSGTGRSEMSSGRSG. Residues 602–621 form a C2H2-type; atypical zinc finger; the sequence is CRICEEEVPTTHVEDHSRVC. The interval 724–750 is disordered; it reads FGPKSDQGMTTSSASSMTPRSPIPTPR. A compositionally biased stretch (polar residues) spans 730 to 740; sequence QGMTTSSASSM. One can recognise a Protein kinase domain in the interval 882 to 1171; sequence FEIIKPISRG…AAEVKQHIFF (290 aa). ATP is bound by residues 888–896 and Lys-911; that span reads ISRGAFGRV. Asp-1005 (proton acceptor) is an active-site residue. Ser-1070 carries the phosphoserine modification. The AGC-kinase C-terminal domain maps to 1172 to 1277; it reads KDINWDTLAR…KNLSQLASIN (106 aa). Positions 1214–1245 are disordered; the sequence is PSGEVPDYSDADSMTNSSGCSSNHHEEGEAEE. Residues 1225–1235 show a composition bias toward polar residues; it reads DSMTNSSGCSS. Residues 1236-1245 show a composition bias toward basic and acidic residues; the sequence is NHHEEGEAEE.

It belongs to the protein kinase superfamily. AGC Ser/Thr protein kinase family.

The enzyme catalyses L-seryl-[protein] + ATP = O-phospho-L-seryl-[protein] + ADP + H(+). It carries out the reaction L-threonyl-[protein] + ATP = O-phospho-L-threonyl-[protein] + ADP + H(+). In terms of biological role, may be involved in root hair elongation. In Arabidopsis thaliana (Mouse-ear cress), this protein is Probable serine/threonine protein kinase IREH1.